The sequence spans 557 residues: Carotenoid-cleaving dioxygenase, mitochondrial (557 aa).

Fe cation-binding residues include His203, His263, His334, and His551.

The protein belongs to the carotenoid oxygenase family. It depends on Fe(2+) as a cofactor.

It localises to the mitochondrion. The enzyme catalyses all-trans-beta-carotene + O2 = beta-ionone + all-trans-10'-apo-beta-carotenal. It catalyses the reaction 5-cis-lycopene + O2 = 5-cis-10'-apo-lycopenal + (3E,5E)-6,10-dimethylundeca-3,5,9-trien-2-one. It carries out the reaction 13-cis-lycopene + O2 = 13-cis-10'-apo-lycopenal + (3E,5E)-6,10-dimethylundeca-3,5,9-trien-2-one. The catalysed reaction is lutein + O2 = (3R,6R)-hydroxy-alpha-ionone + (3R)-3-hydroxy-10'-apo-beta-carotenal. The enzyme catalyses lutein + O2 = (3R,6R)-3-hydroxy-10'-apo-alpha-carotenal + (3R)-hydroxy-beta-ionone. It catalyses the reaction all-trans-zeaxanthin + 2 O2 = 4,9-dimethyldodeca-2,4,6,8,10-pentaenedial + 2 (3R)-hydroxy-beta-ionone. It carries out the reaction all-trans-zeaxanthin + O2 = (3R)-3-hydroxy-10'-apo-beta-carotenal + (3R)-hydroxy-beta-ionone. The catalysed reaction is beta-cryptoxanthin + O2 = all-trans-10'-apo-beta-carotenal + (3R)-hydroxy-beta-ionone. The enzyme catalyses all-trans-10'-apo-beta-carotenal + O2 = beta-ionone + 4,9-dimethyldodeca-2,4,6,8,10-pentaenedial. It catalyses the reaction (3R)-3-hydroxy-10'-apo-beta-carotenal + O2 = 4,9-dimethyldodeca-2,4,6,8,10-pentaenedial + (3R)-hydroxy-beta-ionone. It carries out the reaction (3R,6R)-3-hydroxy-10'-apo-alpha-carotenal + O2 = (3R,6R)-hydroxy-alpha-ionone + 4,9-dimethyldodeca-2,4,6,8,10-pentaenedial. Broad specificity mitochondrial dioxygenase that mediates the asymmetric oxidative cleavage of carotenoids. Cleaves carotenes (pure hydrocarbon carotenoids) such as all-trans-beta-carotene and lycopene as well as xanthophylls (oxygenated carotenoids) such as zeaxanthin, lutein and beta-cryptoxanthin at both the 9,10 and the 9',10' carbon-carbon double bond. Through its function in carotenoids metabolism regulates oxidative stress and the production of important signaling molecules. This is Carotenoid-cleaving dioxygenase, mitochondrial from Pongo abelii (Sumatran orangutan).